Consider the following 196-residue polypeptide: Putative NADH dehydrogenase/NAD(P)H nitroreductase SCO5049 (196 aa).

This sequence belongs to the nitroreductase family. HadB/RutE subfamily. The cofactor is FMN.

The sequence is that of Putative NADH dehydrogenase/NAD(P)H nitroreductase SCO5049 from Streptomyces coelicolor (strain ATCC BAA-471 / A3(2) / M145).